The following is a 652-amino-acid chain: Acetyl-coenzyme A synthetase (652 aa).

CoA contacts are provided by residues 191-194, threonine 311, and asparagine 335; that span reads RAGR. Residues 387–389, 411–416, aspartate 500, and arginine 515 each bind ATP; these read GEP and DTWWQT. Position 523 (serine 523) interacts with CoA. Residue arginine 526 participates in ATP binding. 3 residues coordinate Mg(2+): valine 537, histidine 539, and isoleucine 542. A CoA-binding site is contributed by arginine 584. The residue at position 609 (lysine 609) is an N6-acetyllysine.

Belongs to the ATP-dependent AMP-binding enzyme family. The cofactor is Mg(2+). In terms of processing, acetylated. Deacetylation by the SIR2-homolog deacetylase activates the enzyme.

The catalysed reaction is acetate + ATP + CoA = acetyl-CoA + AMP + diphosphate. Its function is as follows. Catalyzes the conversion of acetate into acetyl-CoA (AcCoA), an essential intermediate at the junction of anabolic and catabolic pathways. Acs undergoes a two-step reaction. In the first half reaction, Acs combines acetate with ATP to form acetyl-adenylate (AcAMP) intermediate. In the second half reaction, it can then transfer the acetyl group from AcAMP to the sulfhydryl group of CoA, forming the product AcCoA. Functionally, enables the cell to use acetate during aerobic growth to generate energy via the TCA cycle, and biosynthetic compounds via the glyoxylate shunt. Acetylates CheY, the response regulator involved in flagellar movement and chemotaxis. The polypeptide is Acetyl-coenzyme A synthetase (Escherichia coli O6:H1 (strain CFT073 / ATCC 700928 / UPEC)).